Reading from the N-terminus, the 94-residue chain is YcgL domain-containing protein VP0875 (94 aa).

The YcgL domain maps to 1–84; the sequence is MLCSIYKSSK…PPENLLEKYK (84 aa).

The polypeptide is YcgL domain-containing protein VP0875 (Vibrio parahaemolyticus serotype O3:K6 (strain RIMD 2210633)).